The sequence spans 154 residues: Ribosome maturation factor RimP (154 aa).

The protein belongs to the RimP family.

Its subcellular location is the cytoplasm. In terms of biological role, required for maturation of 30S ribosomal subunits. The protein is Ribosome maturation factor RimP of Clostridium perfringens (strain SM101 / Type A).